A 625-amino-acid polypeptide reads, in one-letter code: MFEEIPTARPDTPLLDEVNSPADLRAFKKEQLPALVRELREFMLYSVGQTGGHFGAGLGVVELTVALHYLYNTPEDRIVWDVGHQAYPHKILTGRREALLNIRQENGISGFPKRDESEYDTFGVGHSSTSIGAALGMSLAARQLKTGRKAVAIIGDGAMSAGMSFEALNHAGDVKADMLVILNDNEMSISKPVGALSSYFARIWASKTYDNIREGGRKVFSGLPSALELARKAEEHMKGMVSPGMMFEELGFNYIGPIDGHDMDHLLTTIANLKDRKGPQFLHVITKKGKGFEPAEGDPIGYHAINKIEPDPKPNVDKSKLPKYCNVFGKWVCDAAEQDDKLVAITPAMKEGSDLIEFADRFPERYFDVAIAEQHAVTLAAGMACDGIKPVVAIYSTFLQRAYDQLIHDVALQNLDVLFAIDRAGLVGEDGPTHAGVYDLSYLRCIPNMVVMAPSDEDECRKMLQTGYEYKGPAAVRYPRGTGQGVDIESTLSTLKIGKSRTLRTGQSGIVICGFGRPTYDALKAANTLDATLLDMRFVKPIDEETLLTHRDAKLIVTVEENAIMGGAGSAVSELLIANNINIPTLHLGLPDQYEEHASHASMLKRVGLDADGIQKSIELKLTHL.

Thiamine diphosphate is bound by residues His-84 and 125-127 (GHS). Residue Asp-156 coordinates Mg(2+). Residues 157-158 (GA), Asn-185, Phe-292, and Glu-373 contribute to the thiamine diphosphate site. Asn-185 contributes to the Mg(2+) binding site.

This sequence belongs to the transketolase family. DXPS subfamily. In terms of assembly, homodimer. Requires Mg(2+) as cofactor. Thiamine diphosphate is required as a cofactor.

The enzyme catalyses D-glyceraldehyde 3-phosphate + pyruvate + H(+) = 1-deoxy-D-xylulose 5-phosphate + CO2. The protein operates within metabolic intermediate biosynthesis; 1-deoxy-D-xylulose 5-phosphate biosynthesis; 1-deoxy-D-xylulose 5-phosphate from D-glyceraldehyde 3-phosphate and pyruvate: step 1/1. Its function is as follows. Catalyzes the acyloin condensation reaction between C atoms 2 and 3 of pyruvate and glyceraldehyde 3-phosphate to yield 1-deoxy-D-xylulose-5-phosphate (DXP). The sequence is that of 1-deoxy-D-xylulose-5-phosphate synthase from Marinomonas sp. (strain MWYL1).